The sequence spans 1331 residues: Retrotransposon-like protein 1 (1331 aa).

Disordered regions lie at residues 1-123, 128-147, 556-595, and 971-1033; these read MMEP…SQED, TDLA…SSTV, EADE…ETFY, and PSSE…DEPN. Residues 19–30 show a composition bias toward low complexity; sequence SSKQMESSEGSS. Composition is skewed to acidic residues over residues 109–123, 128–143, and 569–578; these read EMEE…SQED, TDLA…EEPD, and GSDDLSESEP. A compositionally biased stretch (low complexity) spans 992–1001; sequence RRVATTTRPT. The span at 1015–1024 shows a compositional bias: acidic residues; sequence PESEDEEESE. The next 2 helical transmembrane spans lie at 1070-1090 and 1117-1137; these read FYRS…LVML and LFLD…TQLF. Residues 1309–1331 form a disordered region; sequence SPPREGATLEELPSDADEDAGLD. Over residues 1320–1331 the composition is skewed to acidic residues; it reads LPSDADEDAGLD.

It localises to the membrane. Its function is as follows. Plays an essential role in capillaries endothelial cells for the maintenance of feto-maternal interface and for development of the placenta. In Bos taurus (Bovine), this protein is Retrotransposon-like protein 1 (RTL1).